The primary structure comprises 668 residues: DNA damage-responsive serine/threonine-protein kinase RqkA (668 aa).

One can recognise a Protein kinase domain in the interval 13-272 (YELLALLGEG…SGAALAHLWA (260 aa)). Residues 19–27 (LGEGGSAQV) and Lys-42 contribute to the ATP site. Asp-137 serves as the catalytic Proton acceptor.

It belongs to the protein kinase superfamily. Ser/Thr protein kinase family. It depends on pyrroloquinoline quinone as a cofactor. In terms of processing, autophosphorylated.

The enzyme catalyses L-seryl-[protein] + ATP = O-phospho-L-seryl-[protein] + ADP + H(+). It carries out the reaction L-threonyl-[protein] + ATP = O-phospho-L-threonyl-[protein] + ADP + H(+). With respect to regulation, autokinase activity is stimulated by DNA damage. Stimulated by PQQ and DNA ends in vitro. In terms of biological role, plays an important role in radiation resistance and DNA double-strand break (DSB) repair. Involved in transcriptional regulation of genes important for bacterial stress response. Phosphorylates PprA in vitro. The polypeptide is DNA damage-responsive serine/threonine-protein kinase RqkA (rqkA) (Deinococcus radiodurans (strain ATCC 13939 / DSM 20539 / JCM 16871 / CCUG 27074 / LMG 4051 / NBRC 15346 / NCIMB 9279 / VKM B-1422 / R1)).